Here is a 519-residue protein sequence, read N- to C-terminus: Protein M35 (519 aa).

The tract at residues Pro-485–Val-519 is disordered. The span at Arg-510–Val-519 shows a compositional bias: basic residues.

The protein localises to the host nucleus. In terms of biological role, plays a role in the inhibition of host type I interferon production within the host nucleus. Targets specifically the NF-kappa-B-mediated interferon-beta transcription. In Mus musculus (Mouse), this protein is Protein M35 (M35).